We begin with the raw amino-acid sequence, 199 residues long: 3-isopropylmalate dehydratase small subunit (199 aa).

The protein belongs to the LeuD family. LeuD type 1 subfamily. As to quaternary structure, heterodimer of LeuC and LeuD.

It catalyses the reaction (2R,3S)-3-isopropylmalate = (2S)-2-isopropylmalate. It participates in amino-acid biosynthesis; L-leucine biosynthesis; L-leucine from 3-methyl-2-oxobutanoate: step 2/4. In terms of biological role, catalyzes the isomerization between 2-isopropylmalate and 3-isopropylmalate, via the formation of 2-isopropylmaleate. This is 3-isopropylmalate dehydratase small subunit from Aeromonas hydrophila subsp. hydrophila (strain ATCC 7966 / DSM 30187 / BCRC 13018 / CCUG 14551 / JCM 1027 / KCTC 2358 / NCIMB 9240 / NCTC 8049).